Reading from the N-terminus, the 427-residue chain is Glutamyl-tRNA reductase (427 aa).

Substrate contacts are provided by residues 49-52 (TCNR), Ser-101, 106-108 (EPQ), and Gln-112. The active-site Nucleophile is Cys-50. An NADP(+)-binding site is contributed by 181–186 (GAGETI). The disordered stretch occupies residues 407–427 (FPATPGYRHPPVRPDDADPAP). Positions 418 to 427 (VRPDDADPAP) are enriched in basic and acidic residues.

It belongs to the glutamyl-tRNA reductase family. Homodimer.

The catalysed reaction is (S)-4-amino-5-oxopentanoate + tRNA(Glu) + NADP(+) = L-glutamyl-tRNA(Glu) + NADPH + H(+). It participates in porphyrin-containing compound metabolism; protoporphyrin-IX biosynthesis; 5-aminolevulinate from L-glutamyl-tRNA(Glu): step 1/2. Catalyzes the NADPH-dependent reduction of glutamyl-tRNA(Glu) to glutamate 1-semialdehyde (GSA). This is Glutamyl-tRNA reductase from Stenotrophomonas maltophilia (strain K279a).